An 82-amino-acid chain; its full sequence is Cell division topological specificity factor (82 aa).

This sequence belongs to the MinE family.

Functionally, prevents the cell division inhibition by proteins MinC and MinD at internal division sites while permitting inhibition at polar sites. This ensures cell division at the proper site by restricting the formation of a division septum at the midpoint of the long axis of the cell. This Hahella chejuensis (strain KCTC 2396) protein is Cell division topological specificity factor.